Reading from the N-terminus, the 59-residue chain is Large ribosomal subunit protein bL32 (59 aa).

The interval 1-21 is disordered; sequence MAVPKKKSSKSKGRSRAAHHA.

It belongs to the bacterial ribosomal protein bL32 family.

The polypeptide is Large ribosomal subunit protein bL32 (Magnetococcus marinus (strain ATCC BAA-1437 / JCM 17883 / MC-1)).